The following is a 155-amino-acid chain: Basic phospholipase A2 PC9 (155 aa).

The N-terminal stretch at M1–A21 is a signal peptide. The propeptide occupies I22 to L27. 7 cysteine pairs are disulfide-bonded: C38-C98, C54-C144, C56-C72, C71-C125, C78-C118, C87-C111, and C105-C116. Ca(2+) is bound by residues Y55, G57, and G59. The active site involves H75. D76 is a binding site for Ca(2+). D119 is a catalytic residue.

Belongs to the phospholipase A2 family. Group I subfamily. D49 sub-subfamily. Requires Ca(2+) as cofactor. As to expression, expressed by the venom gland.

The protein localises to the secreted. It carries out the reaction a 1,2-diacyl-sn-glycero-3-phosphocholine + H2O = a 1-acyl-sn-glycero-3-phosphocholine + a fatty acid + H(+). Its function is as follows. Snake venom phospholipase A2 (PLA2) that inhibits neuromuscular transmission by blocking acetylcholine release from the nerve termini. PLA2 catalyzes the calcium-dependent hydrolysis of the 2-acyl groups in 3-sn-phosphoglycerides. This Laticauda colubrina (Yellow-lipped sea krait) protein is Basic phospholipase A2 PC9.